Here is a 554-residue protein sequence, read N- to C-terminus: CTP synthase (554 aa).

An amidoligase domain region spans residues Met1–Leu265. Ser13 is a binding site for CTP. Ser13 lines the UTP pocket. ATP-binding positions include Ser14–Ile19 and Asp71. 2 residues coordinate Mg(2+): Asp71 and Glu139. CTP contacts are provided by residues Asp146–Glu148, Lys186–Gln191, and Lys222. UTP contacts are provided by residues Lys186–Gln191 and Lys222. In terms of domain architecture, Glutamine amidotransferase type-1 spans Thr292–Gly545. Gly353 provides a ligand contact to L-glutamine. Cys380 functions as the Nucleophile; for glutamine hydrolysis in the catalytic mechanism. Residues Tyr381–Gln384, Glu404, and Arg471 contribute to the L-glutamine site. Residues His518 and Glu520 contribute to the active site.

The protein belongs to the CTP synthase family. As to quaternary structure, homotetramer.

The enzyme catalyses UTP + L-glutamine + ATP + H2O = CTP + L-glutamate + ADP + phosphate + 2 H(+). The catalysed reaction is L-glutamine + H2O = L-glutamate + NH4(+). It carries out the reaction UTP + NH4(+) + ATP = CTP + ADP + phosphate + 2 H(+). It functions in the pathway pyrimidine metabolism; CTP biosynthesis via de novo pathway; CTP from UDP: step 2/2. Allosterically activated by GTP, when glutamine is the substrate; GTP has no effect on the reaction when ammonia is the substrate. The allosteric effector GTP functions by stabilizing the protein conformation that binds the tetrahedral intermediate(s) formed during glutamine hydrolysis. Inhibited by the product CTP, via allosteric rather than competitive inhibition. In terms of biological role, catalyzes the ATP-dependent amination of UTP to CTP with either L-glutamine or ammonia as the source of nitrogen. Regulates intracellular CTP levels through interactions with the four ribonucleotide triphosphates. In Xanthomonas campestris pv. campestris (strain 8004), this protein is CTP synthase.